We begin with the raw amino-acid sequence, 1265 residues long: Dynactin subunit 1 (1265 aa).

The 43-residue stretch at 27-69 folds into the CAP-Gly domain; it reads GMTSFAVGKWVGVVLDEPKGKNSGSIKGQQYFQCDENCGMFVR. A disordered region spans residues 81–179; that stretch reads GSRRSIEDVS…GNGAASHASS (99 aa). Phosphoserine occurs at positions 85, 110, 114, 117, and 121. 2 stretches are compositionally biased toward low complexity: residues 103–138 and 161–177; these read RLSS…SSSS and AEGA…ASHA. S183 carries the phosphoserine modification. Coiled coils occupy residues 213-570, 812-836, and 967-1084; these read NSGA…ESLQ, LIQF…RLPS, and QRAQ…NSTT. The segment at 1082–1106 is disordered; the sequence is STTGKVQPGSESHSPHNISLSGNTS. The residue at position 1117 (S1117) is a Phosphoserine. Residues 1128-1160 adopt a coiled-coil conformation; that stretch reads EEVELLKNAFNQERNQRLRLQAQDMRAKLSQFE.

It belongs to the dynactin 150 kDa subunit family. Monomer and homodimer. Subunit of dynactin, a multiprotein complex part of a tripartite complex with dynein and a adapter, such as BICDL1, BICD2 or HOOK3. The dynactin complex is built around ACTR1A/ACTB filament and consists of an actin-related filament composed of a shoulder domain, a pointed end and a barbed end. Its length is defined by its flexible shoulder domain. The soulder is composed of 2 DCTN1 subunits, 4 DCTN2 and 2 DCTN3. DCTN1/p150(glued) binds directly to microtubules and to cytoplasmic dynein.

The protein resides in the cytoplasm. Its subcellular location is the cytoskeleton. In terms of biological role, part of the dynactin complex that activates the molecular motor dynein for ultra-processive transport along microtubules. Plays a key role in dynein-mediated retrograde transport of vesicles and organelles along microtubules by recruiting and tethering dynein to microtubules. Binds to both dynein and microtubules providing a link between specific cargos, microtubules and dynein. Essential for targeting dynein to microtubule plus ends, recruiting dynein to membranous cargos and enhancing dynein processivity (the ability to move along a microtubule for a long distance without falling off the track). Can also act as a brake to slow the dynein motor during motility along the microtubule. Can regulate microtubule stability by promoting microtubule formation, nucleation and polymerization and by inhibiting microtubule catastrophe in neurons. Inhibits microtubule catastrophe by binding both to microtubules and to tubulin, leading to enhanced microtubule stability along the axon. Plays a role in metaphase spindle orientation. Plays a role in centriole cohesion and subdistal appendage organization and function. Its recruitment to the centriole in a KIF3A-dependent manner is essential for the maintenance of centriole cohesion and the formation of subdistal appendage. Also required for microtubule anchoring at the mother centriole. Plays a role in primary cilia formation. In Drosophila melanogaster (Fruit fly), this protein is Dynactin subunit 1.